An 802-amino-acid polypeptide reads, in one-letter code: Fibroblast growth factor receptor 4 (802 aa).

Positions 1–21 (MRLLLALLGVLLSVPGPPVLS) are cleaved as a signal peptide. The 97-residue stretch at 22–118 (LEASEEVELE…VLQNLTLITG (97 aa)) folds into the Ig-like C2-type 1 domain. Residues 22–369 (LEASEEVELE…AAAPEARYTD (348 aa)) lie on the Extracellular side of the membrane. A disulfide bridge links cysteine 57 with cysteine 101. Asparagine 112 is a glycosylation site (N-linked (GlcNAc...) asparagine). The disordered stretch occupies residues 119-148 (DSLTSSNDDEDPKSHRDPSNRHSYPQQAPY). Ig-like C2-type domains are found at residues 152 to 240 (PQRM…YLLD) and 249 to 349 (PILQ…AWLT). Cysteines 172 and 224 form a disulfide. Asparagine 258, asparagine 290, asparagine 311, and asparagine 322 each carry an N-linked (GlcNAc...) asparagine glycan. Residues cysteine 271 and cysteine 333 are joined by a disulfide bond. The chain crosses the membrane as a helical span at residues 370-390 (IILYASGSLALAVLLLLAGLY). Tyrosine 390 is modified (phosphotyrosine; in variant R-388). The Cytoplasmic segment spans residues 391-802 (RGQALHGRHP…SFPFGSGVQT (412 aa)). In terms of domain architecture, Protein kinase spans 467-755 (LVLGKPLGEG…VLLAVSEEYL (289 aa)). Residues 473 to 481 (LGEGCFGQV) and lysine 503 each bind ATP. Serine 573 is subject to Phosphoserine. The active-site Proton acceptor is aspartate 612. Phosphotyrosine; by autocatalysis occurs at positions 642, 643, and 754.

It belongs to the protein kinase superfamily. Tyr protein kinase family. Fibroblast growth factor receptor subfamily. As to quaternary structure, monomer. Homodimer after ligand binding. Interacts with FGF1, FGF2, FGF4, FGF6, FGF8, FGF9, FGF16, FGF17, FGF18, FGF19, FGF21 and FGF23 (in vitro). Binding affinity for FGF family members is enhanced by interactions between FGFs and heparan sulfate proteoglycans. Interacts with KLB; this strongly increases the affinity for FGF19 and FGF23. Affinity for FGF19 is strongly increased by KLB and sulfated glycosaminoglycans. KLB and KL both interact with the core-glycosylated FGFR4 in the endoplasmic reticulum and promote its degradation, so that only FGFR4 with fully mature N-glycans is expressed at the cell surface. Identified in a complex with NCAM1, CDH2, PLCG1, FRS2, SRC, SHC1, GAP43 and CTTN. Interacts with MMP14 and HIP1. Interacts with STAT3. Post-translationally, N-glycosylated. Full maturation of the glycan chains in the Golgi is essential for high affinity interaction with FGF19. In terms of processing, ubiquitinated. Subject to proteasomal degradation when not fully glycosylated. Autophosphorylated. Binding of FGF family members together with heparan sulfate proteoglycan or heparin promotes receptor dimerization and autophosphorylation on tyrosine residues. Autophosphorylation occurs in trans between the two FGFR molecules present in the dimer. In terms of tissue distribution, expressed in gastrointestinal epithelial cells, pancreas, and gastric and pancreatic cancer cell lines.

The protein resides in the cell membrane. It is found in the endosome. The protein localises to the endoplasmic reticulum. Its subcellular location is the secreted. The enzyme catalyses L-tyrosyl-[protein] + ATP = O-phospho-L-tyrosyl-[protein] + ADP + H(+). Present in an inactive conformation in the absence of bound ligand. Ligand binding leads to dimerization and activation by autophosphorylation on tyrosine residues. Functionally, tyrosine-protein kinase that acts as a cell-surface receptor for fibroblast growth factors and plays a role in the regulation of cell proliferation, differentiation and migration, and in regulation of lipid metabolism, bile acid biosynthesis, glucose uptake, vitamin D metabolism and phosphate homeostasis. Required for normal down-regulation of the expression of CYP7A1, the rate-limiting enzyme in bile acid synthesis, in response to FGF19. Phosphorylates PLCG1 and FRS2. Ligand binding leads to the activation of several signaling cascades. Activation of PLCG1 leads to the production of the cellular signaling molecules diacylglycerol and inositol 1,4,5-trisphosphate. Phosphorylation of FRS2 triggers recruitment of GRB2, GAB1, PIK3R1 and SOS1, and mediates activation of RAS, MAPK1/ERK2, MAPK3/ERK1 and the MAP kinase signaling pathway, as well as of the AKT1 signaling pathway. Promotes SRC-dependent phosphorylation of the matrix protease MMP14 and its lysosomal degradation. FGFR4 signaling is down-regulated by receptor internalization and degradation; MMP14 promotes internalization and degradation of FGFR4. Mutations that lead to constitutive kinase activation or impair normal FGFR4 inactivation lead to aberrant signaling. This chain is Fibroblast growth factor receptor 4 (FGFR4), found in Homo sapiens (Human).